We begin with the raw amino-acid sequence, 267 residues long: Diphthine--ammonia ligase (267 aa).

Y97 is subject to Phosphotyrosine.

The protein belongs to the Diphthine--ammonia ligase family.

The catalysed reaction is diphthine-[translation elongation factor 2] + NH4(+) + ATP = diphthamide-[translation elongation factor 2] + AMP + diphosphate + H(+). Its pathway is protein modification; peptidyl-diphthamide biosynthesis. Functionally, amidase that catalyzes the last step of diphthamide biosynthesis using ammonium and ATP. Diphthamide biosynthesis consists in the conversion of an L-histidine residue in the translation elongation factor eEF-2 (EEF2) to diphthamide. This Rattus norvegicus (Rat) protein is Diphthine--ammonia ligase (Dph6).